The primary structure comprises 977 residues: MELGPPLVLLLATVWHGQGAPVIEPSGPELVVEPGETVTLRCVSNGSVEWDGPISPYWTLDPESPGSTLTTRNATFKNTGTYRCTELEDPMAGSTTIHLYVKDPAHSWNLLAQEVTVVEGQEAVLPCLITDPALKDSVSLMREGGRQVLRKTVYFFSPWRGFIIRKAKVLDSNTYVCKTMVNGRESTSTGIWLKVNRVHPEPPQIKLEPSKLVRIRGEAAQIVCSATNAEVGFNVILKRGDTKLEIPLNSDFQDNYYKKVRALSLNAVDFQDAGIYSCVASNDVGTRTATMNFQVVESAYLNLTSEQSLLQEVSVGDSLILTVHADAYPSIQHYNWTYLGPFFEDQRKLEFITQRAIYRYTFKLFLNRVKASEAGQYFLMAQNKAGWNNLTFELTLRYPPEVSVTWMPVNGSDVLFCDVSGYPQPSVTWMECRGHTDRCDEAQALQVWNDTHPEVLSQKPFDKVIIQSQLPIGTLKHNMTYFCKTHNSVGNSSQYFRAVSLGQSKQLPDESLFTPVVVACMSVMSLLVLLLLLLLYKYKQKPKYQVRWKIIERYEGNSYTFIDPTQLPYNEKWEFPRNNLQFGKTLGAGAFGKVVEATAFGLGKEDAVLKVAVKMLKSTAHADEKEALMSELKIMSHLGQHENIVNLLGACTHGGPVLVITEYCCYGDLLNFLRRKAEAMLGPSLSPGQDSEGDSSYKNIHLEKKYVRRDSGFSSQGVDTYVEMRPVSTSSSDSFFKQDLDKEASRPLELWDLLHFSSQVAQGMAFLASKNCIHRDVAARNVLLTSGHVAKIGDFGLARDIMNDSNYVVKGNARLPVKWMAPESIFDCVYTVQSDVWSYGILLWEIFSLGLNPYPGILVNNKFYKLVKDGYQMAQPVFAPKNIYSIMQSCWDLEPTRRPTFQQICFLLQEQARLERRDQDYANLPSSGGSSGSDSGGGSSGGSSSEPEEESSSEHLACCEPGDIAQPLLQPNNYQFC.

The first 19 residues, 1 to 19 (MELGPPLVLLLATVWHGQG), serve as a signal peptide directing secretion. Topologically, residues 20-515 (APVIEPSGPE…QLPDESLFTP (496 aa)) are extracellular. 5 consecutive Ig-like C2-type domains span residues 24 to 104 (EPSG…VKDP), 107 to 197 (SWNL…KVNR), 204 to 298 (QIKL…VVES), 299 to 397 (AYLN…LTLR), and 398 to 503 (YPPE…SLGQ). Cystine bridges form between C42/C84, C127/C177, and C224/C278. Residues N45 and N73 are each glycosylated (N-linked (GlcNAc...) asparagine). Residues N302, N335, N389, N410, N449, N478, and N491 are each glycosylated (N-linked (GlcNAc...) asparagine). A disulfide bridge connects residues C417 and C483. The chain crosses the membrane as a helical span at residues 516 to 536 (VVVACMSVMSLLVLLLLLLLY). At 537 to 977 (KYKQKPKYQV…LLQPNNYQFC (441 aa)) the chain is on the cytoplasmic side. Residues 540-572 (QKPKYQVRWKIIERYEGNSYTFIDPTQLPYNEK) form a regulatory juxtamembrane domain region. Phosphotyrosine; by autocatalysis occurs at positions 544 and 559. Residues 580–913 (LQFGKTLGAG…ICFLLQEQAR (334 aa)) enclose the Protein kinase domain. ATP is bound by residues 586 to 594 (LGAGAFGKV) and K614. Y697 and Y706 each carry phosphotyrosine; by autocatalysis. S711 carries the phosphoserine modification. Position 721 is a phosphotyrosine; by autocatalysis (Y721). The active-site Proton acceptor is the D776. The activation loop stretch occupies residues 794-816 (DFGLARDIMNDSNYVVKGNARLP). 2 positions are modified to phosphotyrosine; by autocatalysis: Y807 and Y921. Residues 921-957 (YANLPSSGGSSGSDSGGGSSGGSSSEPEEESSSEHLA) form a disordered region. Over residues 929-941 (GSSGSDSGGGSSG) the composition is skewed to gly residues. Y974 carries the phosphotyrosine; by autocatalysis modification.

Belongs to the protein kinase superfamily. Tyr protein kinase family. CSF-1/PDGF receptor subfamily. As to quaternary structure, monomer. Homodimer. Interacts with CSF1 and IL34. Interaction with dimeric CSF1 or IL34 leads to receptor homodimerization. Interacts with INPPL1/SHIP2 and THOC5. Interacts (tyrosine phosphorylated) with PLCG2 (via SH2 domain). Interacts (tyrosine phosphorylated) with PIK3R1 (via SH2 domain). Interacts (tyrosine phosphorylated) with FYN, YES1 and SRC (via SH2 domain). Interacts (tyrosine phosphorylated) with CBL, GRB2 and SLA2. Autophosphorylated in response to CSF1 or IL34 binding. Phosphorylation at Tyr-559 is important for normal down-regulation of signaling by ubiquitination, internalization and degradation. Phosphorylation at Tyr-559 and Tyr-807 is important for interaction with SRC family members, including FYN, YES1 and SRC, and for subsequent activation of these protein kinases. Phosphorylation at Tyr-697 and Tyr-921 is important for interaction with GRB2. Phosphorylation at Tyr-721 is important for interaction with PIK3R1. Phosphorylation at Tyr-721 and Tyr-807 is important for interaction with PLCG2. Phosphorylation at Tyr-974 is important for interaction with CBL. Dephosphorylation by PTPN2 negatively regulates downstream signaling and macrophage differentiation. In terms of processing, ubiquitinated. Becomes rapidly polyubiquitinated after autophosphorylation, leading to its degradation. As to expression, widely expressed.

The protein localises to the cell membrane. It carries out the reaction L-tyrosyl-[protein] + ATP = O-phospho-L-tyrosyl-[protein] + ADP + H(+). With respect to regulation, present in an inactive conformation in the absence of bound ligand. CSF1 or IL34 binding leads to dimerization and activation by autophosphorylation on tyrosine residues. Inhibited by imatinib/STI-571 (Gleevec), dasatinib, sunitinib/SU11248, lestaurtinib/CEP-701, midostaurin/PKC-412, Ki20227, linifanib/ABT-869, Axitinib/AG013736, sorafenib/BAY 43-9006 and GW2580. In terms of biological role, tyrosine-protein kinase that acts as a cell-surface receptor for CSF1 and IL34 and plays an essential role in the regulation of survival, proliferation and differentiation of hematopoietic precursor cells, especially mononuclear phagocytes, such as macrophages and monocytes. Promotes the release of pro-inflammatory chemokines in response to IL34 and CSF1, and thereby plays an important role in innate immunity and in inflammatory processes. Plays an important role in the regulation of osteoclast proliferation and differentiation, the regulation of bone resorption, and is required for normal bone and tooth development. Required for normal male and female fertility, and for normal development of milk ducts and acinar structures in the mammary gland during pregnancy. Promotes reorganization of the actin cytoskeleton, regulates formation of membrane ruffles, cell adhesion and cell migration, and promotes cancer cell invasion. Activates several signaling pathways in response to ligand binding, including the ERK1/2 and the JNK pathway. Phosphorylates PIK3R1, PLCG2, GRB2, SLA2 and CBL. Activation of PLCG2 leads to the production of the cellular signaling molecules diacylglycerol and inositol 1,4,5-trisphosphate, that then lead to the activation of protein kinase C family members, especially PRKCD. Phosphorylation of PIK3R1, the regulatory subunit of phosphatidylinositol 3-kinase, leads to activation of the AKT1 signaling pathway. Activated CSF1R also mediates activation of the MAP kinases MAPK1/ERK2 and/or MAPK3/ERK1, and of the SRC family kinases SRC, FYN and YES1. Activated CSF1R transmits signals both via proteins that directly interact with phosphorylated tyrosine residues in its intracellular domain, or via adapter proteins, such as GRB2. Promotes activation of STAT family members STAT3, STAT5A and/or STAT5B. Promotes tyrosine phosphorylation of SHC1 and INPP5D/SHIP-1. Receptor signaling is down-regulated by protein phosphatases, such as INPP5D/SHIP-1, that dephosphorylate the receptor and its downstream effectors, and by rapid internalization of the activated receptor. In the central nervous system, may play a role in the development of microglia macrophages. The sequence is that of Macrophage colony-stimulating factor 1 receptor (Csf1r) from Mus musculus (Mouse).